The chain runs to 778 residues: Beta-phellandrene synthase (neryl-diphosphate-cyclizing), chloroplastic (778 aa).

Residues 1–36 constitute a chloroplast transit peptide; that stretch reads MIVGYRSTIITLSHPKLGNGKTISSNAIFQRSCRVR. Mg(2+) contacts are provided by Asp531, Asn676, and Glu684. The DDXXD motif signature appears at 531 to 535; sequence DDHFE.

This sequence belongs to the terpene synthase family. Tpse subfamily. Requires Mg(2+) as cofactor. As to expression, trichomes.

Its subcellular location is the plastid. The protein localises to the chloroplast. The enzyme catalyses neryl diphosphate = beta-phellandrene + diphosphate. Its function is as follows. Monoterpene synthase catalyzing the production of beta-phellandrene from neryl diphosphate. Also produces lower amounts of delta-2-carene, alpha-phellandrene and limonene. When incubated in vitro with geranyl diphosphate, catalyzes the formation of acyclic myrcene and ocimene as major products in addition to beta-phellandrene. The protein is Beta-phellandrene synthase (neryl-diphosphate-cyclizing), chloroplastic (PHS1) of Solanum lycopersicum (Tomato).